Consider the following 400-residue polypeptide: Tryptophan synthase beta chain (400 aa).

The residue at position 92 (K92) is an N6-(pyridoxal phosphate)lysine.

This sequence belongs to the TrpB family. In terms of assembly, tetramer of two alpha and two beta chains. Requires pyridoxal 5'-phosphate as cofactor.

It catalyses the reaction (1S,2R)-1-C-(indol-3-yl)glycerol 3-phosphate + L-serine = D-glyceraldehyde 3-phosphate + L-tryptophan + H2O. Its pathway is amino-acid biosynthesis; L-tryptophan biosynthesis; L-tryptophan from chorismate: step 5/5. The beta subunit is responsible for the synthesis of L-tryptophan from indole and L-serine. This chain is Tryptophan synthase beta chain, found in Neisseria gonorrhoeae.